A 273-amino-acid chain; its full sequence is Outer surface protein A (273 aa).

Positions 1–16 (MKKYLLGIGLILALIA) are cleaved as a signal peptide. Residue cysteine 17 is the site of N-palmitoyl cysteine attachment. The S-diacylglycerol cysteine moiety is linked to residue cysteine 17.

It belongs to the OspA lipoprotein family.

The protein localises to the cell outer membrane. Its subcellular location is the cell surface. This is Outer surface protein A from Borreliella burgdorferi (strain N40) (Borrelia burgdorferi).